We begin with the raw amino-acid sequence, 143 residues long: Protein Wnt-1 (143 aa).

Residue Ser1 is the site of O-palmitoleoyl serine; by PORCN attachment. The interval 38–81 (EGVRGNSNRGDRGDRRDRGDRSDNGGTEANFQPYNSNHKPPGPR) is disordered. Over residues 46 to 60 (RGDRGDRRDRGDRSD) the composition is skewed to basic and acidic residues. The span at 64–75 (TEANFQPYNSNH) shows a compositional bias: polar residues. A disulfide bridge links Cys109 with Cys124. Residues Asn110 and Asn111 are each glycosylated (N-linked (GlcNAc...) asparagine).

This sequence belongs to the Wnt family. Palmitoleoylation is required for efficient binding to frizzled receptors. Palmitoleoylation is necessary for proper trafficking to cell surface. Depalmitoleoylated by NOTUM, leading to inhibit Wnt signaling pathway.

It localises to the secreted. Its subcellular location is the extracellular space. The protein resides in the extracellular matrix. Ligand for members of the frizzled family of seven transmembrane receptors. Probable developmental protein. The sequence is that of Protein Wnt-1 (WNT-1) from Evasterias troschelii (Mottled sea star).